Consider the following 173-residue polypeptide: Adenine phosphoribosyltransferase (173 aa).

The protein belongs to the purine/pyrimidine phosphoribosyltransferase family. Homodimer.

Its subcellular location is the cytoplasm. The enzyme catalyses AMP + diphosphate = 5-phospho-alpha-D-ribose 1-diphosphate + adenine. It functions in the pathway purine metabolism; AMP biosynthesis via salvage pathway; AMP from adenine: step 1/1. Its function is as follows. Catalyzes a salvage reaction resulting in the formation of AMP, that is energically less costly than de novo synthesis. The polypeptide is Adenine phosphoribosyltransferase (Listeria monocytogenes serovar 1/2a (strain ATCC BAA-679 / EGD-e)).